A 926-amino-acid polypeptide reads, in one-letter code: UvrABC system protein A (926 aa).

31 to 38 lines the ATP pocket; the sequence is GPSGSGKS. The segment at 251–278 adopts a C4-type zinc-finger fold; sequence CPEHGFSIPELSARLFSFNSPYGACPSC. 2 ABC transporter domains span residues 308–568 and 588–916; these read SGYF…PSSL and PSGK…KYLR. ATP is bound at residue 620–627; the sequence is GVSGSGKS. The C4-type zinc-finger motif lies at 719–745; it reads CEACQGEGVIKVEMHFLPPVYVTCEVC.

This sequence belongs to the ABC transporter superfamily. UvrA family. Forms a heterotetramer with UvrB during the search for lesions.

Its subcellular location is the cytoplasm. The UvrABC repair system catalyzes the recognition and processing of DNA lesions. UvrA is an ATPase and a DNA-binding protein. A damage recognition complex composed of 2 UvrA and 2 UvrB subunits scans DNA for abnormalities. When the presence of a lesion has been verified by UvrB, the UvrA molecules dissociate. The sequence is that of UvrABC system protein A from Aquifex aeolicus (strain VF5).